Consider the following 343-residue polypeptide: Anthranilate phosphoribosyltransferase (343 aa).

5-phospho-alpha-D-ribose 1-diphosphate contacts are provided by residues glycine 78, 81 to 82, threonine 86, 88 to 91, 106 to 114, and serine 118; these read GD, NIST, and KHGNRSVSS. Glycine 78 provides a ligand contact to anthranilate. Serine 90 lines the Mg(2+) pocket. Asparagine 109 is a binding site for anthranilate. Arginine 164 provides a ligand contact to anthranilate. Mg(2+) is bound by residues aspartate 223 and glutamate 224.

This sequence belongs to the anthranilate phosphoribosyltransferase family. Homodimer. Mg(2+) serves as cofactor.

It catalyses the reaction N-(5-phospho-beta-D-ribosyl)anthranilate + diphosphate = 5-phospho-alpha-D-ribose 1-diphosphate + anthranilate. The protein operates within amino-acid biosynthesis; L-tryptophan biosynthesis; L-tryptophan from chorismate: step 2/5. Functionally, catalyzes the transfer of the phosphoribosyl group of 5-phosphorylribose-1-pyrophosphate (PRPP) to anthranilate to yield N-(5'-phosphoribosyl)-anthranilate (PRA). This is Anthranilate phosphoribosyltransferase from Chlamydia caviae (strain ATCC VR-813 / DSM 19441 / 03DC25 / GPIC) (Chlamydophila caviae).